The following is a 506-amino-acid chain: 2-isopropylmalate synthase (506 aa).

The 263-residue stretch at 4–266 (ILFMDTTLRD…QSSIILKEIK (263 aa)) folds into the Pyruvate carboxyltransferase domain. Mn(2+) is bound by residues Asp-13, His-201, His-203, and Asn-237. Residues 390 to 506 (NIKQLQVHFV…KLKALLTLVK (117 aa)) form a regulatory domain region.

Belongs to the alpha-IPM synthase/homocitrate synthase family. LeuA type 1 subfamily. Homodimer. Requires Mn(2+) as cofactor.

It localises to the cytoplasm. The enzyme catalyses 3-methyl-2-oxobutanoate + acetyl-CoA + H2O = (2S)-2-isopropylmalate + CoA + H(+). It participates in amino-acid biosynthesis; L-leucine biosynthesis; L-leucine from 3-methyl-2-oxobutanoate: step 1/4. In terms of biological role, catalyzes the condensation of the acetyl group of acetyl-CoA with 3-methyl-2-oxobutanoate (2-ketoisovalerate) to form 3-carboxy-3-hydroxy-4-methylpentanoate (2-isopropylmalate). The polypeptide is 2-isopropylmalate synthase (Bacillus cytotoxicus (strain DSM 22905 / CIP 110041 / 391-98 / NVH 391-98)).